Here is a 262-residue protein sequence, read N- to C-terminus: GTP cyclohydrolase 1 type 2 homolog (262 aa).

His-68, His-69, Asp-108, His-226, and Glu-229 together coordinate a divalent metal cation.

Belongs to the GTP cyclohydrolase I type 2/NIF3 family. Homohexamer.

This is GTP cyclohydrolase 1 type 2 homolog from Ureaplasma parvum serovar 3 (strain ATCC 700970).